Consider the following 153-residue polypeptide: 6,7-dimethyl-8-ribityllumazine synthase (153 aa).

Residues F21, 55–57, and 79–81 contribute to the 5-amino-6-(D-ribitylamino)uracil site; these read AFE and CVI. 84–85 provides a ligand contact to (2S)-2-hydroxy-3-oxobutyl phosphate; it reads AT. H87 serves as the catalytic Proton donor. F112 lines the 5-amino-6-(D-ribitylamino)uracil pocket. Position 126 (R126) interacts with (2S)-2-hydroxy-3-oxobutyl phosphate.

This sequence belongs to the DMRL synthase family. As to quaternary structure, forms an icosahedral capsid composed of 60 subunits, arranged as a dodecamer of pentamers.

It catalyses the reaction (2S)-2-hydroxy-3-oxobutyl phosphate + 5-amino-6-(D-ribitylamino)uracil = 6,7-dimethyl-8-(1-D-ribityl)lumazine + phosphate + 2 H2O + H(+). It functions in the pathway cofactor biosynthesis; riboflavin biosynthesis; riboflavin from 2-hydroxy-3-oxobutyl phosphate and 5-amino-6-(D-ribitylamino)uracil: step 1/2. Functionally, catalyzes the formation of 6,7-dimethyl-8-ribityllumazine by condensation of 5-amino-6-(D-ribitylamino)uracil with 3,4-dihydroxy-2-butanone 4-phosphate. This is the penultimate step in the biosynthesis of riboflavin. The protein is 6,7-dimethyl-8-ribityllumazine synthase of Staphylococcus epidermidis (strain ATCC 35984 / DSM 28319 / BCRC 17069 / CCUG 31568 / BM 3577 / RP62A).